Here is a 3401-residue protein sequence, read N- to C-terminus: MPVRPRNKPKGVNVMAAGKVAQKIKNKLKSKAKAIGNISKGLRGFILFILAQIFWARKLTPRVRTMWKKVDKAKATRVLKGIRNIATQLITGLAGRKKRRSMTHGIILSLGVTMVIGASLHHHGGRYLLNVTHADLGKTFTIGSGNCTANIVEAGSWCSDSMEYECVTLAEAEEPDDIDCWCRGVERVRVTYGRCKNGLDSRRSRRAAVITAHIDKGLTTRQEKWLSTSMGERQIQRIERWMMRNPFYAAISLLLAWWVGSDIKQKVLIAFLVLAIGPAYSTHCVGIPKRDFVQGVQGNTWVNLVLDQGSCVTLSSDNKPSVDIWLDSIFISSPVLVRRVSHTATISDTKVQTACPTNGEAKLEEEASAEYECKKTYSDRGWGNGCGLFGKGSIVACAKYTSTGHMDVYEIDSTKIEYVTKAQVHAGMKHDDTTMVKEVKFEPTTGSMDVEFTGYGTLGLECHVQTMVDMANYYLVVMGQEAWLVHKQWVEDITLPWKIGEGGFWRDKHYMVEFTEPHATTMTVMVLGAQEGALRTALAGAMVVTYTDSSGTKKFSLKGGHVSCKARMNGLVLKGSTYTMCKGGFSFVKTPTDTGHGTAVMQVKVSKGTPCRIPVQAVDSSNGGTNRATLITANPIAATTEDEVMIELSPPYGESYIMIGTGDDKLTYHWHKSGSTIGSLFTETYKGAQRMAIIGDDAWDFSSSSNFFNSIGKALHTVFGNVFHSIFGGLSWITKIILGGMFLWLGVNSRNQTMCMVLMAVGGILLFMTLGVSGEVGCSLDIKRRELKCGDGLFLFNDVNDWTHKYKFHPEDPKLLASLIKKSHQEGRCGLSSVNEVEHRMWNSIKTEINAMFEENGVDLSVVVKDSKLHYKMGSHAFPKVEEGLSLGWKNWGKSLVFEPKQSNVSFIIDGTSEDCPFTNRIWNAFVVEEFGIGMFTTNVFLTHKVDFTKQCDASLLGAGVKGDVAVHGDPTLWMESRKENGTWQLHTIQMNGLRECFWPQTHTIHGSSVMESAMFLPKQYGGPVSHHNHYTGYAVQTAGPWNVQPLIVKRETCPGTQVRVDEQCRDRGNSVRSTTSEGKIIPEWCCRSCTLPPVSFWGPDSCWYAMEIRPQNVHEEHLVRSWASAGTGMAESSLGLVALFLFTDIFARKRMTRKFMVIGCLGVLSVMIVGGFTALDLIRYIIVVGQHFASMNHGGDVAYLAIIAVGKLRPGLLMMYSFKAAWSPKERVMVALGLLVFQAVLGDFVHTGLWEWADAAGMCILIIQGMATRKEKTYIMPILALLTPLSMEIIRKTGIFACVGLLGLSLWRGGDTTMRKGMPLLAGAATAASGLTRASLSVVFILCATAASRRSWPIGEIMAIVGIVGTGFGMAVNDQASLAGPMLVFGLIMIVYATLGRADGLTLKRVGDITWEEEAVHSGSSTRYDVTLNEAGEFKLVHEEPVVWSHVVFLVVALIAASVHPIALVVVTIIWTYGKKHLRGGVLWDIPIAPPVEEAEPLEDGVYAILQSGLMGKAQAGVGVAQEGVFHTMWHVTRGGFLMVGGKRLTPHWASVKRDLICYGGNWKLDGKWDGVEEVQLIAVAPGKAPTNVQTKPGVFRMADGTEIGAVALDYPSGTSGSPIVNEKGQVIGLYGNGIVIGGSGYVSSIAQIAGGEGVTEEPLLDTATMLRKGKLTVLDYHPGAGKTRIFLPYILKECVRRKLRTLVLAPTRVVLSEMREALRDVAVKYHTQAFQAAGTGRELVDAMCHATLSHRMLESSRSVNWEVIIMDEAHYMDPTSIAARGWAAHKANNHESAVIFMTATPPGSANEFPESNGEIEDLRRDIPTEPWNKGHEWILEDRRPTVWFLPSIRAANNIAACLRRSERSVVVLNRQTFETVYPTIKTKKPDFILATDIAEMGANLGVERVIDCRTSYKPVLTTDGRVVIKGPLRIPASAAAQRRGRVGRCKDRDTDSYVYSEETSEDNGHYVCWTEASMLLDNMEVKGGMVAPLYDVEAQKTEMVPGEARLRDDQRKVFRTLIKRYDLPVWVSWQVAKSGLMLEDRKWCFDGDDENTILNDNGEKILARSPGGQRKFLCPRWNDSRLYYDNASLMSFLAFAEGRRSYLGVWHAVQMAPLKLGEKLTESLDTMVMLMRSEEGTRAYKLASTNAPEAVTILLMTGIVVACTLGVGLAFMWPKGVDKMSMGMITMSIAGYLMLQGGLTPVQVASVLLIFFIFMVVLIPEAGTQRSINDNKTLYVLLGVALLIGAITANEMGYLEKTKRDLLGERVQNEWKLELPMFDLRPGAAWSIYVGLATLVMPVLDHWIRTEYGSLSLTGIAQQASILQAMDKGVPFFKLNMSVIVLLVSVWNNFSMLSVLCGVGLLGVHCAFVLPGLRAQAAKQAQRRVYHGVAKNPVVDGQTTAEIETAPEMPPLYEKKLALVLLGVVAIANGVMVRSAFSMAETVVLLSAAVGPLLEGNTSAIWNGPMAVAMAGIMRGNYYAGIGLAYNLWILQSPKRGRSTTMTLGELWKRQLNLMGKREFELYKITDIHEVDRSQAQAVMKAGIDNVGISVSRGTSKLKWMVDRNYVEPLGRVVDLGCGRGGWSYLCAASKRVSSVKAYTLGITGHEKPVNVQSLGWNIIKFKDKTDVFKMEPHACETLLCDIGESSSNPLVEMERTLKVIDNVERWMSPTTESYCFKVLAPYRPEVIERLERFQLKYGGGIVRVPFSRNSTHEMYYVSGVKNNLTHMVSCVSRLLLRRMTHPDGRCKVEADVVFPTGTRNVASDLGPMDLSKVKDRVNRLRSEQGTWFQDDSHPYRTWHYLGSYVAKQSGSAATMVNGVVKMLSMPWDRIENVTQLAMTDTTPYGQQRVFKEKVDTRAPPPPPGTRAIMEVVNKWMFDFLAREKAPRICTKEEFINKVRSNAALGNMLEEQDGWKDAATAVQDPRFWALVDRERQVHLEGRCETCIYNMMGKREKKPAEFGKAKGSRAIWYMWLGARFLEFEALGFLNEDHWFGRENSLAGVEGVGLQYLGYVVKNVWEKSNGIMYADDTAGWDTRVTEADLDDEQYLLSKMEGYHKKLASAVMNMTYKYKVVKVPRPGPGGKVFMDVIARQDQRGSGQVVTYPLNTGTNMKVQLIRMAEGEGVISRHDIERVTIKTLNALRVWLAENGAERLSRMAVSGDDCVVAPLDERFGLALHHLNAMSKIRKDIDDWTESIPWRSWESVPFCSHHFHQLFLKDGRSIVVPCRDQDELVGRARVSPGNGWKLKETACLSKAYAQMWLLMYFHKRDLRLMGNAICSSVPAHWVPTGRTTWSIHAHNEWISSERMLDVWNKVWIVDNPHMPDKTCIDDWRDVPYLPKSQDRLCGSLIGITARASWAENIRAVVNKIRGMIGNEVYSDHLSVMGRYTYSVQEVGTVL.

The Cytoplasmic segment spans residues 1-104 (MPVRPRNKPK…GRKKRRSMTH (104 aa)). Residues 101 to 117 (SMTHGIILSLGVTMVIG) constitute a propeptide, ER anchor for the capsid protein C, removed in mature form by serine protease NS3. The chain crosses the membrane as a helical span at residues 105–125 (GIILSLGVTMVIGASLHHHGG). The Extracellular portion of the chain corresponds to 126–240 (RYLLNVTHAD…GERQIQRIER (115 aa)). N-linked (GlcNAc...) asparagine; by host glycans are attached at residues Asn130 and Asn146. The helical transmembrane segment at 241–261 (WMMRNPFYAAISLLLAWWVGS) threads the bilayer. Residues 262-266 (DIKQK) are Cytoplasmic-facing. Residues 267-281 (VLIAFLVLAIGPAYS) traverse the membrane as a helical segment. At 282–725 (THCVGIPKRD…HTVFGNVFHS (444 aa)) the chain is on the extracellular side. Disulfide bonds link Cys284–Cys311, Cys355–Cys386, Cys373–Cys397, Cys462–Cys564, and Cys581–Cys611. The fusion peptide stretch occupies residues 379–392 (DRGWGNGCGLFGKG). The chain crosses the membrane as a helical span at residues 726–746 (IFGGLSWITKIILGGMFLWLG). Over 747–753 (VNSRNQT) the chain is Extracellular. A helical transmembrane segment spans residues 754 to 774 (MCMVLMAVGGILLFMTLGVSG). At 775–1122 (EVGCSLDIKR…NVHEEHLVRS (348 aa)) the chain is on the extracellular side. 6 disulfide bridges follow: Cys778-Cys789, Cys829-Cys916, Cys952-Cys997, Cys1054-Cys1103, Cys1065-Cys1087, and Cys1086-Cys1090. N-linked (GlcNAc...) asparagine; by host glycosylation is found at Asn904 and Asn981. The chain crosses the membrane as a helical span at residues 1123 to 1143 (WASAGTGMAESSLGLVALFLF). The Cytoplasmic segment spans residues 1144 to 1198 (TDIFARKRMTRKFMVIGCLGVLSVMIVGGFTALDLIRYIIVVGQHFASMNHGGDV). The helical transmembrane segment at 1199-1219 (AYLAIIAVGKLRPGLLMMYSF) threads the bilayer. Over 1220–1287 (KAAWSPKERV…PILALLTPLS (68 aa)) the chain is Lumenal. Residues 1288-1308 (MEIIRKTGIFACVGLLGLSLW) form a helical membrane-spanning segment. Topologically, residues 1309-1352 (RGGDTTMRKGMPLLAGAATAASGLTRASLSVVFILCATAASRRS) are cytoplasmic. The helical transmembrane segment at 1353–1373 (WPIGEIMAIVGIVGTGFGMAV) threads the bilayer. The Lumenal portion of the chain corresponds to 1374–1376 (NDQ). Residues 1377 to 1397 (ASLAGPMLVFGLIMIVYATLG) traverse the membrane as a helical segment. The Cytoplasmic portion of the chain corresponds to 1398 to 1447 (RADGLTLKRVGDITWEEEAVHSGSSTRYDVTLNEAGEFKLVHEEPVVWSH). Residues 1404-1443 (LKRVGDITWEEEAVHSGSSTRYDVTLNEAGEFKLVHEEPV) form an interacts with and activates NS3 protease region. The segment at residues 1448–1468 (VVFLVVALIAASVHPIALVVV) is an intramembrane region (helical). Residues 1469–2154 (TIIWTYGKKH…ASTNAPEAVT (686 aa)) are Cytoplasmic-facing. Residues 1481–1661 (GGVLWDIPIA…GGEGVTEEPL (181 aa)) enclose the Peptidase S7 domain. Catalysis depends on charge relay system; for serine protease NS3 activity residues His1532, Asp1556, and Ser1617. One can recognise a Helicase ATP-binding domain in the interval 1665–1821 (ATMLRKGKLT…ESNGEIEDLR (157 aa)). Residues 1669-1672 (RKGK) are important for RNA-binding. 1678 to 1685 (YHPGAGKT) serves as a coordination point for ATP. Residues 1769–1772 (DEAH) carry the DEAH box motif. In terms of domain architecture, Helicase C-terminal spans 1816-1995 (EIEDLRRDIP…GMVAPLYDVE (180 aa)). A helical membrane pass occupies residues 2155 to 2175 (ILLMTGIVVACTLGVGLAFMW). At 2176-2181 (PKGVDK) the chain is on the lumenal side. Positions 2182–2200 (MSMGMITMSIAGYLMLQGG) form an intramembrane region, helical. Leu2201 is a topological domain (lumenal). The chain crosses the membrane as a helical span at residues 2202–2222 (TPVQVASVLLIFFIFMVVLIP). Residues 2223-2235 (EAGTQRSINDNKT) lie on the Cytoplasmic side of the membrane. The helical transmembrane segment at 2236–2250 (LYVLLGVALLIGAIT) threads the bilayer. The Cytoplasmic segment spans residues 2251 to 2285 (ANEMGYLEKTKRDLLGERVQNEWKLELPMFDLRPG). Positions 2286–2306 (AAWSIYVGLATLVMPVLDHWI) form an intramembrane region, helical. At 2307–2354 (RTEYGSLSLTGIAQQASILQAMDKGVPFFKLNMSVIVLLVSVWNNFSM) the chain is on the lumenal side. The chain crosses the membrane as a helical span at residues 2355–2375 (LSVLCGVGLLGVHCAFVLPGL). The Cytoplasmic segment spans residues 2376-2418 (RAQAAKQAQRRVYHGVAKNPVVDGQTTAEIETAPEMPPLYEKK). A helical transmembrane segment spans residues 2419–2439 (LALVLLGVVAIANGVMVRSAF). Residues 2440–2467 (SMAETVVLLSAAVGPLLEGNTSAIWNGP) lie on the Lumenal side of the membrane. A helical transmembrane segment spans residues 2468-2488 (MAVAMAGIMRGNYYAGIGLAY). Topologically, residues 2489–3401 (NLWILQSPKR…YSVQEVGTVL (913 aa)) are cytoplasmic. An mRNA cap 0-1 NS5-type MT domain is found at 2499-2763 (GRSTTMTLGE…DVVFPTGTRN (265 aa)). S-adenosyl-L-methionine is bound at residue Ser2554. Ser2554 carries the post-translational modification Phosphoserine. The active-site For 2'-O-MTase activity is Lys2559. Residues Gly2584, Trp2585, Thr2602, Leu2603, Asp2629, and Val2630 each contribute to the S-adenosyl-L-methionine site. Asp2644 acts as the For 2'-O-MTase activity in catalysis. Ile2645 is a binding site for S-adenosyl-L-methionine. Active-site for 2'-O-MTase activity residues include Lys2680 and Glu2716. Tyr2718 provides a ligand contact to S-adenosyl-L-methionine. The short motif at 2869–2902 (RAIMEVVNKWMFDFLAREKAPRICTKEEFINKVR) is the Nuclear localization signal element. Residues Glu2936, His2940, Cys2945, and Cys2948 each coordinate Zn(2+). The 153-residue stretch at 3026-3178 (GIMYADDTAG…APLDERFGLA (153 aa)) folds into the RdRp catalytic domain. Zn(2+)-binding residues include His3213, Cys3229, and Cys3348.

In the N-terminal section; belongs to the class I-like SAM-binding methyltransferase superfamily. mRNA cap 0-1 NS5-type methyltransferase family. Homodimer. Interacts (via N-terminus) with host EXOC1 (via C-terminus); this interaction results in EXOC1 degradation through the proteasome degradation pathway. As to quaternary structure, forms heterodimers with envelope protein E in the endoplasmic reticulum and Golgi. In terms of assembly, homodimer; in the endoplasmic reticulum and Golgi. Interacts with protein prM. Interacts with non-structural protein 1. Homodimer; Homohexamer when secreted. Interacts with envelope protein E. NS1 interacts with NS4B. Interacts with host complement protein CFH; this interaction leads to the degradation of C3. As to quaternary structure, interacts (via N-terminus) with serine protease NS3. In terms of assembly, forms a heterodimer with serine protease NS3. May form homooligomers. Forms a heterodimer with NS2B. Interacts with non-structural protein 2A (via N-terminus). Interacts with NS4B. Interacts with unphosphorylated RNA-directed RNA polymerase NS5; this interaction stimulates RNA-directed RNA polymerase NS5 guanylyltransferase activity. NS3 interacts with host PDCD6IP; this interaction contributes to virion release. As to quaternary structure, interacts with serine protease NS3. In terms of assembly, homodimer. Interacts with host STAT2; this interaction prevents the establishment of cellular antiviral state. Interacts with serine protease NS3. Interacts with host TRIM23; this interaction leads to NS5 ubiquitination. Post-translationally, specific enzymatic cleavages in vivo yield mature proteins. The nascent capsid protein C contains a C-terminal hydrophobic domain that act as a signal sequence for translocation of prM into the lumen of the ER. Mature capsid protein C is cleaved at a site upstream of this hydrophobic domain by NS3. prM is cleaved in post-Golgi vesicles by a host furin, releasing the mature small envelope protein M, and peptide pr. Non-structural protein 2A-alpha, a C-terminally truncated form of non-structural protein 2A, results from partial cleavage by NS3. Specific enzymatic cleavages in vivo yield mature proteins peptide 2K acts as a signal sequence and is removed from the N-terminus of NS4B by the host signal peptidase in the ER lumen. Signal cleavage at the 2K-4B site requires a prior NS3 protease-mediated cleavage at the 4A-2K site. Cleaved in post-Golgi vesicles by a host furin, releasing the mature small envelope protein M, and peptide pr. This cleavage is incomplete as up to 30% of viral particles still carry uncleaved prM. In terms of processing, N-glycosylated. Post-translationally, N-glycosylated. The excreted form is glycosylated and this is required for efficient secretion of the protein from infected cells. Polyubiquitinated; ubiquitination is probably mediated by host TRIM23 and is prerequisite for NS5-STAT2 interaction. NS5 is not ISGylated or sumoylated. In terms of processing, phosphorylated on serines residues. This phosphorylation may trigger NS5 nuclear localization.

It localises to the virion. Its subcellular location is the host nucleus. It is found in the host cytoplasm. The protein localises to the host perinuclear region. The protein resides in the virion membrane. It localises to the host endoplasmic reticulum membrane. Its subcellular location is the secreted. It catalyses the reaction Selective hydrolysis of -Xaa-Xaa-|-Yaa- bonds in which each of the Xaa can be either Arg or Lys and Yaa can be either Ser or Ala.. The enzyme catalyses RNA(n) + a ribonucleoside 5'-triphosphate = RNA(n+1) + diphosphate. It carries out the reaction a ribonucleoside 5'-triphosphate + H2O = a ribonucleoside 5'-diphosphate + phosphate + H(+). The catalysed reaction is ATP + H2O = ADP + phosphate + H(+). It catalyses the reaction a 5'-end (5'-triphosphoguanosine)-ribonucleoside in mRNA + S-adenosyl-L-methionine = a 5'-end (N(7)-methyl 5'-triphosphoguanosine)-ribonucleoside in mRNA + S-adenosyl-L-homocysteine. The enzyme catalyses a 5'-end (N(7)-methyl 5'-triphosphoguanosine)-ribonucleoside in mRNA + S-adenosyl-L-methionine = a 5'-end (N(7)-methyl 5'-triphosphoguanosine)-(2'-O-methyl-ribonucleoside) in mRNA + S-adenosyl-L-homocysteine + H(+). Its function is as follows. Plays a role in virus budding by binding to the cell membrane and gathering the viral RNA into a nucleocapsid that forms the core of a mature virus particle. During virus entry, may induce genome penetration into the host cytoplasm after hemifusion induced by the surface proteins. Can migrate to the cell nucleus where it modulates host functions. In terms of biological role, inhibits RNA silencing by interfering with host Dicer. Prevents premature fusion activity of envelope proteins in trans-Golgi by binding to envelope protein E at pH6.0. After virion release in extracellular space, gets dissociated from E dimers. Functionally, acts as a chaperone for envelope protein E during intracellular virion assembly by masking and inactivating envelope protein E fusion peptide. prM is the only viral peptide matured by host furin in the trans-Golgi network probably to avoid catastrophic activation of the viral fusion activity in acidic Golgi compartment prior to virion release. prM-E cleavage is inefficient, and many virions are only partially matured. These uncleaved prM would play a role in immune evasion. Its function is as follows. May play a role in virus budding. Exerts cytotoxic effects by activating a mitochondrial apoptotic pathway through M ectodomain. May display a viroporin activity. In terms of biological role, binds to host cell surface receptor and mediates fusion between viral and cellular membranes. Envelope protein is synthesized in the endoplasmic reticulum in the form of heterodimer with protein prM. They play a role in virion budding in the ER, and the newly formed immature particle is covered with 60 spikes composed of heterodimer between precursor prM and envelope protein E. The virion is transported to the Golgi apparatus where the low pH causes dissociation of PrM-E heterodimers and formation of E homodimers. prM-E cleavage is inefficient, and many virions are only partially matured. These uncleaved prM would play a role in immune evasion. Involved in immune evasion, pathogenesis and viral replication. Once cleaved off the polyprotein, is targeted to three destinations: the viral replication cycle, the plasma membrane and the extracellular compartment. Essential for viral replication. Required for formation of the replication complex and recruitment of other non-structural proteins to the ER-derived membrane structures. Excreted as a hexameric lipoparticle that plays a role against host immune response. Antagonizing the complement function. Binds to the host macrophages and dendritic cells. Inhibits signal transduction originating from Toll-like receptor 3 (TLR3). Functionally, component of the viral RNA replication complex that functions in virion assembly and antagonizes the host immune response. Its function is as follows. Required cofactor for the serine protease function of NS3. May have membrane-destabilizing activity and form viroporins. In terms of biological role, displays three enzymatic activities: serine protease, NTPase and RNA helicase. NS3 serine protease, in association with NS2B, performs its autocleavage and cleaves the polyprotein at dibasic sites in the cytoplasm: C-prM, NS2A-NS2B, NS2B-NS3, NS3-NS4A, NS4A-2K and NS4B-NS5. NS3 RNA helicase binds RNA and unwinds dsRNA in the 3' to 5' direction. Also plays a role in virus assembly. Regulates the ATPase activity of the NS3 helicase activity. NS4A allows NS3 helicase to conserve energy during unwinding. Functionally, functions as a signal peptide for NS4B and is required for the interferon antagonism activity of the latter. Its function is as follows. Induces the formation of ER-derived membrane vesicles where the viral replication takes place. Inhibits interferon (IFN)-induced host STAT1 phosphorylation and nuclear translocation, thereby preventing the establishment of cellular antiviral state by blocking the IFN-alpha/beta pathway. In terms of biological role, replicates the viral (+) and (-) RNA genome, and performs the capping of genomes in the cytoplasm. NS5 methylates viral RNA cap at guanine N-7 and ribose 2'-O positions. Besides its role in RNA genome replication, also prevents the establishment of cellular antiviral state by blocking the interferon-alpha/beta (IFN-alpha/beta) signaling pathway. IFN-I induces binding of NS5 to host IFN-activated transcription factor STAT2, preventing its transcriptional activity. Host TRIM23 is the E3 ligase that interacts with and polyubiquitinates NS5 to promote its binding to STAT2 and trigger IFN-I signaling inhibition. The protein is Genome polyprotein of Edge Hill virus (EHV).